A 303-amino-acid polypeptide reads, in one-letter code: Putative fimbrium subunit Fim1C (303 aa).

The first 22 residues, 1–22 (MKKQALICALLATVLLPGCSED), serve as a signal peptide directing secretion.

The protein belongs to the bacteroidetes fimbrillin superfamily. Mfa-like family. May be part of the fimbrial tip.

The protein resides in the fimbrium. Its function is as follows. Putative component of the fimbrium tip. Fimbriae are filamentous appendages on the cell surface that mediate cell adhesion and biofilm formation. The sequence is that of Putative fimbrium subunit Fim1C (fim1C) from Bacteroides uniformis (strain ATCC 8492 / DSM 6597 / CCUG 4942 / CIP 103695 / JCM 5828 / KCTC 5204 / NCTC 13054 / VPI 0061).